The chain runs to 430 residues: UDP-N-acetylglucosamine 1-carboxyvinyltransferase 1 (430 aa).

22–23 (KN) contributes to the phosphoenolpyruvate binding site. A UDP-N-acetyl-alpha-D-glucosamine-binding site is contributed by Arg-93. Cys-117 serves as the catalytic Proton donor. Cys-117 carries the post-translational modification 2-(S-cysteinyl)pyruvic acid O-phosphothioketal. UDP-N-acetyl-alpha-D-glucosamine is bound by residues 122–126 (RPVDL), Asp-305, and Val-327.

Belongs to the EPSP synthase family. MurA subfamily.

It localises to the cytoplasm. The catalysed reaction is phosphoenolpyruvate + UDP-N-acetyl-alpha-D-glucosamine = UDP-N-acetyl-3-O-(1-carboxyvinyl)-alpha-D-glucosamine + phosphate. The protein operates within cell wall biogenesis; peptidoglycan biosynthesis. Cell wall formation. Adds enolpyruvyl to UDP-N-acetylglucosamine. The protein is UDP-N-acetylglucosamine 1-carboxyvinyltransferase 1 of Listeria monocytogenes serovar 1/2a (strain ATCC BAA-679 / EGD-e).